The primary structure comprises 328 residues: N-acyl-aromatic-L-amino acid amidohydrolase (carboxylate-forming) A (328 aa).

Histidine 30 and glutamate 33 together coordinate Zn(2+). Substrate contacts are provided by residues arginine 74 and 81–82 (NR). Histidine 127 lines the Zn(2+) pocket. Substrate-binding residues include glutamate 189 and tyrosine 300.

It belongs to the AspA/AstE family. Aspartoacylase subfamily. As to quaternary structure, homotetramer. Zn(2+) is required as a cofactor.

The protein resides in the apical cell membrane. It localises to the cytoplasm. The catalysed reaction is an N-acyl-aromatic L-alpha-amino acid + H2O = an aromatic L-alpha-amino acid + a carboxylate. It catalyses the reaction an N-acetyl-L-cysteine-S-conjugate + H2O = an S-substituted L-cysteine + acetate. Plays an important role in deacetylating mercapturic acids in kidney proximal tubules. This chain is N-acyl-aromatic-L-amino acid amidohydrolase (carboxylate-forming) A (acy3.1), found in Danio rerio (Zebrafish).